Consider the following 203-residue polypeptide: Large ribosomal subunit protein bL25 (203 aa).

It belongs to the bacterial ribosomal protein bL25 family. CTC subfamily. In terms of assembly, part of the 50S ribosomal subunit; part of the 5S rRNA/L5/L18/L25 subcomplex. Contacts the 5S rRNA. Binds to the 5S rRNA independently of L5 and L18.

Functionally, this is one of the proteins that binds to the 5S RNA in the ribosome where it forms part of the central protuberance. This Cupriavidus pinatubonensis (strain JMP 134 / LMG 1197) (Cupriavidus necator (strain JMP 134)) protein is Large ribosomal subunit protein bL25.